Reading from the N-terminus, the 378-residue chain is UPF0754 membrane protein BCA_0919 (378 aa).

The next 2 membrane-spanning stretches (helical) occupy residues 1 to 21 and 357 to 377; these read MNIW…GGFT and YLGA…LLFL.

Belongs to the UPF0754 family.

Its subcellular location is the cell membrane. The chain is UPF0754 membrane protein BCA_0919 from Bacillus cereus (strain 03BB102).